A 224-amino-acid polypeptide reads, in one-letter code: Ribonuclease T (224 aa).

The segment covering 1 to 11 (MSEDLYEDDQD) has biased composition (acidic residues). The tract at residues 1–20 (MSEDLYEDDQDSQVSSGSRH) is disordered. The 175-residue stretch at 32-206 (VVVDVETGGF…YDTEKTAELF (175 aa)) folds into the Exonuclease domain. 4 residues coordinate Mg(2+): Asp35, Glu37, His193, and Asp198. Residue His193 is the Proton donor/acceptor of the active site.

Belongs to the RNase T family. In terms of assembly, homodimer. The cofactor is Mg(2+).

Functionally, trims short 3' overhangs of a variety of RNA species, leaving a one or two nucleotide 3' overhang. Responsible for the end-turnover of tRNA: specifically removes the terminal AMP residue from uncharged tRNA (tRNA-C-C-A). Also appears to be involved in tRNA biosynthesis. In Pseudomonas entomophila (strain L48), this protein is Ribonuclease T.